The primary structure comprises 149 residues: Large ribosomal subunit protein bL9 (149 aa).

The protein belongs to the bacterial ribosomal protein bL9 family. Part of the 50S ribosomal subunit. In stalled/collided disomes (pairs of ribosomes where the leading ribosome is stalled and a second ribosome has collided with it), bL9 in the collided ribosome contacts bS6 and uL2, while it contacts only helices of the 16S rRNA in the stalled ribosome; the inter-ribosome bridge thus formed is different from that formed between normally translating ribosomes.

Binds to the 23S rRNA. This is Large ribosomal subunit protein bL9 from Bacillus subtilis (strain 168).